Here is a 291-residue protein sequence, read N- to C-terminus: Serine hydrolase BPHL (291 aa).

The N-terminal stretch at 1–37 is a signal peptide; the sequence is MATATVRPAAQRLRLLLSPLKSRICVPQAEPVATFGT. The region spanning 62–173 is the AB hydrolase-1 domain; the sequence is AILLLPGMLG…ANAYVTEEDS (112 aa). Position 74 is an N6-acetyllysine; alternate (lysine 74). Lysine 74 is subject to N6-succinyllysine; alternate. N6-acetyllysine is present on residues lysine 86 and lysine 119. Lysine 126 carries the N6-acetyllysine; alternate modification. Lysine 126 bears the N6-succinyllysine; alternate mark. The Nucleophile role is filled by serine 139. Lysine 184 is subject to N6-succinyllysine. N6-acetyllysine; alternate is present on lysine 191. Lysine 191 carries the post-translational modification N6-succinyllysine; alternate. Lysine 217 carries the post-translational modification N6-acetyllysine. Mg(2+) is bound at residue glutamate 221. Residue lysine 243 is modified to N6-acetyllysine. Aspartate 244 serves as the catalytic Charge relay system. 2 positions are modified to N6-acetyllysine; alternate: lysine 260 and lysine 271. Residues lysine 260 and lysine 271 each carry the N6-succinyllysine; alternate modification. Histidine 272 (charge relay system) is an active-site residue.

It belongs to the AB hydrolase superfamily. Lipase family. Monomer. May also form homodimers.

The protein localises to the mitochondrion. The enzyme catalyses L-homocysteine thiolactone + H2O = L-homocysteine + H(+). The catalysed reaction is valacyclovir + H2O = acyclovir + L-valine + H(+). Its function is as follows. Specific alpha-amino acid ester serine hydrolase that prefers small, hydrophobic, and aromatic side chains and does not have a stringent requirement for the leaving group other than preferring a primary alcohol. Has homocysteine-thiolactonase activity (in vitro) and may play a significant role in the detoxification of homocysteine thiolactone in vivo. Catalyzes the hydrolytic activation of amino acid ester prodrugs of nucleoside analogs such as valacyclovir and valganciclovir, converting them into their active forms (acyclovir and ganciclovir). In Mus musculus (Mouse), this protein is Serine hydrolase BPHL (Bphl).